A 116-amino-acid polypeptide reads, in one-letter code: Methionine-R-sulfoxide reductase B1 (116 aa).

The 106-residue stretch at 1-106 (MSFCSFFGGE…FSSSLKFVPK (106 aa)) folds into the MsrB domain. The Zn(2+) site is built by Cys23, Cys26, Cys71, and Cys74. Sec95 functions as the Nucleophile in the catalytic mechanism. Position 95 (Sec95) is a non-standard amino acid, selenocysteine.

The protein belongs to the MsrB Met sulfoxide reductase family. Zn(2+) is required as a cofactor. Truncated MSRB1/SEPX1 proteins produced by failed UGA/Sec decoding are ubiquitinated by the CRL2(FEM1C) E3 ubiquitin-protein ligase complex.

It is found in the cytoplasm. The protein resides in the nucleus. It localises to the cytoskeleton. It catalyses the reaction L-methionyl-[protein] + [thioredoxin]-disulfide + H2O = L-methionyl-(R)-S-oxide-[protein] + [thioredoxin]-dithiol. It carries out the reaction [thioredoxin]-disulfide + L-methionine + H2O = L-methionine (R)-S-oxide + [thioredoxin]-dithiol. Functionally, methionine-sulfoxide reductase that specifically reduces methionine (R)-sulfoxide back to methionine. While in many cases, methionine oxidation is the result of random oxidation following oxidative stress, methionine oxidation is also a post-translational modification that takes place on specific residue. Acts as a regulator of actin assembly by reducing methionine (R)-sulfoxide mediated by MICALs (MICAL1, MICAL2 or MICAL3) on actin, thereby promoting filament repolymerization. Plays a role in innate immunity by reducing oxidized actin, leading to actin repolymerization in macrophages. The chain is Methionine-R-sulfoxide reductase B1 (MSRB1) from Pongo abelii (Sumatran orangutan).